The following is a 148-amino-acid chain: Lysozyme C-3 (148 aa).

An N-terminal signal peptide occupies residues 1-18; it reads MKTLLVLALLLLSVSVQA. Residues 19–148 enclose the C-type lysozyme domain; it reads KVYDRCEFAR…VSQYIRGCKL (130 aa). 4 disulfides stabilise this stretch: Cys-24–Cys-146, Cys-48–Cys-134, Cys-83–Cys-99, and Cys-95–Cys-113. Catalysis depends on residues Glu-53 and Asp-71.

Belongs to the glycosyl hydrolase 22 family. Monomer.

Its subcellular location is the secreted. The catalysed reaction is Hydrolysis of (1-&gt;4)-beta-linkages between N-acetylmuramic acid and N-acetyl-D-glucosamine residues in a peptidoglycan and between N-acetyl-D-glucosamine residues in chitodextrins.. Functionally, lysozymes have primarily a bacteriolytic function; those in tissues and body fluids are associated with the monocyte-macrophage system and enhance the activity of immunoagents. The protein is Lysozyme C-3 of Sus scrofa (Pig).